The following is a 131-amino-acid chain: Small ribosomal subunit protein uS8 (131 aa).

The protein belongs to the universal ribosomal protein uS8 family. In terms of assembly, part of the 30S ribosomal subunit. Contacts proteins S5 and S12.

Its function is as follows. One of the primary rRNA binding proteins, it binds directly to 16S rRNA central domain where it helps coordinate assembly of the platform of the 30S subunit. This is Small ribosomal subunit protein uS8 from Ralstonia nicotianae (strain ATCC BAA-1114 / GMI1000) (Ralstonia solanacearum).